The sequence spans 520 residues: MSSKCDVVVVGGGISGMAAAKLLHDSGLNVIVLEARDRVGGRTYTLRNQKVKYVDLGGSYVGPTQNHILRLSKELGLETYKVNEVERLIHHTKGKSYPFRGSFPSVWNPITYLDHNNLWRTMDDMGREIPSDAPWKAPLAEQWDLMTMKELLDKICWTESSKQLAILFVNLCVTAEIHEVSALWFLWYVKQCGGTTRIFSTSNGGQERKFVGGSGQVSERIMDLLGDRVKLERPVIHIDQTGENVLVETLNHELYEAKYVISAVPPVLGMKIHFNPPLPMMRNQLITRVPLGSVIKSIVYYKEPFWRNMDYCGSMIIEGEEAPVAYALDDTKPDGSYPAIIGFILAHKARKLARLTKEERLKKLCDLYAKVLGSQEALHPVHYEEKNWCEEQYSGGCYTSYFPPGIMTQYGRVLRQPVGRIYFAGTETATHWSGYMEGAVEAGERAAREILHAMGKIPEDEIWLPEPESVDVPAKPITTTFLQRHLPSVPGLLKLIGLTTIFSATALGFLAHKRGLLVRI.

The residue at position 2 (S2) is an N-acetylserine. Topologically, residues 2-489 are cytoplasmic; that stretch reads SSKCDVVVVG…TFLQRHLPSV (488 aa). At K52 the chain carries N6-acetyllysine. An S-8alpha-FAD cysteine modification is found at C397. Residues 490 to 516 traverse the membrane as a helical; Anchor for type IV membrane protein segment; sequence PGLLKLIGLTTIFSATALGFLAHKRGL. The Mitochondrial intermembrane portion of the chain corresponds to 517–520; the sequence is LVRI.

As to quaternary structure, monomer, homo- or heterodimer (containing two subunits of similar size). Each subunit contains a covalently bound flavin. Enzymatically active as monomer. It depends on FAD as a cofactor.

It is found in the mitochondrion outer membrane. It carries out the reaction a secondary aliphatic amine + O2 + H2O = a primary amine + an aldehyde + H2O2. The enzyme catalyses a primary methyl amine + O2 + H2O = an aldehyde + H2O2 + NH4(+). It catalyses the reaction benzylamine + O2 + H2O = benzaldehyde + H2O2 + NH4(+). The catalysed reaction is (R)-adrenaline + O2 + H2O = (R)-3,4-dihydroxymandelaldehyde + methylamine + H2O2. It carries out the reaction dopamine + O2 + H2O = 3,4-dihydroxyphenylacetaldehyde + H2O2 + NH4(+). The enzyme catalyses tyramine + O2 + H2O = (4-hydroxyphenyl)acetaldehyde + H2O2 + NH4(+). It catalyses the reaction (R)-noradrenaline + O2 + H2O = (R)-3,4-dihydroxymandelaldehyde + H2O2 + NH4(+). The catalysed reaction is 2-phenylethylamine + O2 + H2O = 2-phenylacetaldehyde + H2O2 + NH4(+). It carries out the reaction N-acetylputrescine + O2 + H2O = 4-acetamidobutanal + H2O2 + NH4(+). In terms of biological role, catalyzes the oxidative deamination of primary and some secondary amines such as neurotransmitters, and exogenous amines including the tertiary amine, neurotoxin 1-methyl-4-phenyl-1,2,3,6-tetrahydropyridine (MPTP), with concomitant reduction of oxygen to hydrogen peroxide and participates in the metabolism of neuroactive and vasoactive amines in the central nervous system and peripheral tissues. Preferentially degrades benzylamine and phenylethylamine. In Bos taurus (Bovine), this protein is Amine oxidase [flavin-containing] B.